We begin with the raw amino-acid sequence, 339 residues long: Malate dehydrogenase 3, cytoplasmic (339 aa).

NAD(+)-binding positions include 22–23 (NI), Asp49, and Gly96. An oxaloacetate-binding site is contributed by Arg105. Positions 119 and 138 each coordinate NAD(+). Oxaloacetate contacts are provided by Asn138, Arg169, His194, and Ser249. The active-site Proton acceptor is the His194.

Belongs to the LDH/MDH superfamily. MDH type 2 family. Expressed in rosette leaves at low levels.

The protein localises to the cytoplasm. It catalyses the reaction (S)-malate + NAD(+) = oxaloacetate + NADH + H(+). Catalyzes a reversible NAD-dependent dehydrogenase reaction involved in central metabolism and redox homeostasis between organelle compartments. This is Malate dehydrogenase 3, cytoplasmic from Arabidopsis thaliana (Mouse-ear cress).